Here is a 347-residue protein sequence, read N- to C-terminus: D-alanine--D-alanine ligase (347 aa).

Residues 134-332 enclose the ATP-grasp domain; it reads KLYAKDLGIK…LAQSLPKTPK (199 aa). 161-216 provides a ligand contact to ATP; the sequence is LINFNFPFIIKPNSAGSSLGVSVVKEEKELNYALDSAFEYSKEVLIEPFIQGVKEY. Residues Asp-288, Glu-300, and Asn-302 each contribute to the Mg(2+) site.

Belongs to the D-alanine--D-alanine ligase family. The cofactor is Mg(2+). Mn(2+) serves as cofactor.

It localises to the cytoplasm. The enzyme catalyses 2 D-alanine + ATP = D-alanyl-D-alanine + ADP + phosphate + H(+). Its pathway is cell wall biogenesis; peptidoglycan biosynthesis. In terms of biological role, cell wall formation. The sequence is that of D-alanine--D-alanine ligase from Helicobacter pylori (strain HPAG1).